The primary structure comprises 639 residues: Threonine--tRNA ligase (639 aa).

Residues 1 to 61 form the TGS domain; it reads MATVRLPDGK…DGGGELEFVT (61 aa). The interval 239-536 is catalytic; it reads DHRRLGRELG…LIEHYAGAFP (298 aa). Cys333, His384, and His513 together coordinate Zn(2+).

Belongs to the class-II aminoacyl-tRNA synthetase family. In terms of assembly, homodimer. Zn(2+) serves as cofactor.

Its subcellular location is the cytoplasm. The catalysed reaction is tRNA(Thr) + L-threonine + ATP = L-threonyl-tRNA(Thr) + AMP + diphosphate + H(+). Functionally, catalyzes the attachment of threonine to tRNA(Thr) in a two-step reaction: L-threonine is first activated by ATP to form Thr-AMP and then transferred to the acceptor end of tRNA(Thr). Also edits incorrectly charged L-seryl-tRNA(Thr). In Rubrobacter xylanophilus (strain DSM 9941 / JCM 11954 / NBRC 16129 / PRD-1), this protein is Threonine--tRNA ligase.